A 310-amino-acid polypeptide reads, in one-letter code: 4-hydroxy-3-methylbut-2-enyl diphosphate reductase (310 aa).

Cysteine 13 contributes to the [4Fe-4S] cluster binding site. Residues histidine 42 and histidine 75 each coordinate (2E)-4-hydroxy-3-methylbut-2-enyl diphosphate. The dimethylallyl diphosphate site is built by histidine 42 and histidine 75. Isopentenyl diphosphate is bound by residues histidine 42 and histidine 75. Position 97 (cysteine 97) interacts with [4Fe-4S] cluster. Histidine 125 provides a ligand contact to (2E)-4-hydroxy-3-methylbut-2-enyl diphosphate. Residue histidine 125 participates in dimethylallyl diphosphate binding. Histidine 125 contacts isopentenyl diphosphate. Glutamate 127 (proton donor) is an active-site residue. Threonine 165 serves as a coordination point for (2E)-4-hydroxy-3-methylbut-2-enyl diphosphate. A [4Fe-4S] cluster-binding site is contributed by cysteine 195. The (2E)-4-hydroxy-3-methylbut-2-enyl diphosphate site is built by serine 223, serine 224, asparagine 225, and serine 267. Serine 223, serine 224, asparagine 225, and serine 267 together coordinate dimethylallyl diphosphate. Isopentenyl diphosphate-binding residues include serine 223, serine 224, asparagine 225, and serine 267.

The protein belongs to the IspH family. [4Fe-4S] cluster serves as cofactor.

It carries out the reaction isopentenyl diphosphate + 2 oxidized [2Fe-2S]-[ferredoxin] + H2O = (2E)-4-hydroxy-3-methylbut-2-enyl diphosphate + 2 reduced [2Fe-2S]-[ferredoxin] + 2 H(+). The catalysed reaction is dimethylallyl diphosphate + 2 oxidized [2Fe-2S]-[ferredoxin] + H2O = (2E)-4-hydroxy-3-methylbut-2-enyl diphosphate + 2 reduced [2Fe-2S]-[ferredoxin] + 2 H(+). The protein operates within isoprenoid biosynthesis; dimethylallyl diphosphate biosynthesis; dimethylallyl diphosphate from (2E)-4-hydroxy-3-methylbutenyl diphosphate: step 1/1. Its pathway is isoprenoid biosynthesis; isopentenyl diphosphate biosynthesis via DXP pathway; isopentenyl diphosphate from 1-deoxy-D-xylulose 5-phosphate: step 6/6. Functionally, catalyzes the conversion of 1-hydroxy-2-methyl-2-(E)-butenyl 4-diphosphate (HMBPP) into a mixture of isopentenyl diphosphate (IPP) and dimethylallyl diphosphate (DMAPP). Acts in the terminal step of the DOXP/MEP pathway for isoprenoid precursor biosynthesis. This Chlamydia pneumoniae (Chlamydophila pneumoniae) protein is 4-hydroxy-3-methylbut-2-enyl diphosphate reductase.